The following is a 152-amino-acid chain: SUZ RNA-binding domain-containing (152 aa).

N-acetylmethionine is present on M1. 2 disordered regions span residues 30–86 and 99–152; these read TQKE…LPVK and RKRI…KQRR. Phosphoserine is present on residues S37, S39, and S51. The region spanning 42–107 is the SUZ domain; it reads KVPIVIQDDS…ARKRILGSAS (66 aa). Over residues 66–79 the composition is skewed to polar residues; it reads PTSNGVVSGPNSAS. Residues S105 and S107 each carry the phosphoserine modification. The 42-residue stretch at 111-152 folds into the SUZ-C domain; sequence EQEKPILDRPTRISQPEDSRQPNNVIRQPLGPDGSQGFKQRR. Over residues 113-130 the composition is skewed to basic and acidic residues; it reads EKPILDRPTRISQPEDSR.

This sequence belongs to the SZRD1 family.

The polypeptide is SUZ RNA-binding domain-containing (SZRD1) (Bos taurus (Bovine)).